We begin with the raw amino-acid sequence, 250 residues long: Putative HTH-type transcriptional regulatory protein PAE1627 (250 aa).

Residues 129–183 enclose the HTH cro/C1-type domain; that stretch reads LRAKRQQAGLSLGTLATNLGVTRETVYRYERGEIEAPLKIAEKLINMFGEDITKK. Residues 140–159 constitute a DNA-binding region (H-T-H motif); sequence LGTLATNLGVTRETVYRYER.

In Pyrobaculum aerophilum (strain ATCC 51768 / DSM 7523 / JCM 9630 / CIP 104966 / NBRC 100827 / IM2), this protein is Putative HTH-type transcriptional regulatory protein PAE1627.